Here is a 478-residue protein sequence, read N- to C-terminus: MEFEAVIGLEIHIELNCPTKLFCDCPNNPGDEPNVNTCPICLWFPGAIPRLSQAALEKASLLCLGLGAELQPRSAFDQKVYYYPDLPKGYQLSQAHLPLARGGGIDITDENGRPKRLRIHHIHMEEDVAKLVHEIEGRTPISLVDFNRAGAPLVEIVSEPDFRTPHDAMEFLKALRTQVRYVGASECSMENGTMRVDANISVRPRGTDQMNTKVEVKNMNSIRHVGDAVAYEISRQSACVSSGEAVVLHTRLWDPDRKATFPMRAKFEGPCVPDPSVPFIDLSPEWIEKMRARLPEMPAARAERFVARYGLTDEEAVYLSADPETASYFEALIAEKVAPRTAMHWLTTQLLAAVRERGQELSGTPVTPARFAALLKMLAKDEINANAARQVLIELFDCGESPEKIVEARGIRQVSDHDALEGLIDRVLGENPAAVADYRGGQGKAAGFLIGKVMQASGGKANPKIIRELLTKKLDALG.

Belongs to the GatB/GatE family. GatB subfamily. As to quaternary structure, heterotrimer of A, B and C subunits.

The enzyme catalyses L-glutamyl-tRNA(Gln) + L-glutamine + ATP + H2O = L-glutaminyl-tRNA(Gln) + L-glutamate + ADP + phosphate + H(+). It carries out the reaction L-aspartyl-tRNA(Asn) + L-glutamine + ATP + H2O = L-asparaginyl-tRNA(Asn) + L-glutamate + ADP + phosphate + 2 H(+). Allows the formation of correctly charged Asn-tRNA(Asn) or Gln-tRNA(Gln) through the transamidation of misacylated Asp-tRNA(Asn) or Glu-tRNA(Gln) in organisms which lack either or both of asparaginyl-tRNA or glutaminyl-tRNA synthetases. The reaction takes place in the presence of glutamine and ATP through an activated phospho-Asp-tRNA(Asn) or phospho-Glu-tRNA(Gln). This is Aspartyl/glutamyl-tRNA(Asn/Gln) amidotransferase subunit B 1 from Syntrophus aciditrophicus (strain SB).